The primary structure comprises 187 residues: BLOC-1-related complex subunit 8 homolog (187 aa).

The segment at 165 to 187 (QSQHETANDTRQGYNDDANNDQD) is disordered.

The protein belongs to the BORCS8 family.

It is found in the lysosome membrane. In terms of biological role, may participate in the coupling of lysosomes to microtubule plus-end-directed kinesin motor. The protein is BLOC-1-related complex subunit 8 homolog of Nematostella vectensis (Starlet sea anemone).